The chain runs to 502 residues: ATP synthase subunit alpha (502 aa).

Gly169 to Thr176 is an ATP binding site.

It belongs to the ATPase alpha/beta chains family. F-type ATPases have 2 components, CF(1) - the catalytic core - and CF(0) - the membrane proton channel. CF(1) has five subunits: alpha(3), beta(3), gamma(1), delta(1), epsilon(1). CF(0) has three main subunits: a(1), b(2) and c(9-12). The alpha and beta chains form an alternating ring which encloses part of the gamma chain. CF(1) is attached to CF(0) by a central stalk formed by the gamma and epsilon chains, while a peripheral stalk is formed by the delta and b chains.

Its subcellular location is the cell membrane. The catalysed reaction is ATP + H2O + 4 H(+)(in) = ADP + phosphate + 5 H(+)(out). In terms of biological role, produces ATP from ADP in the presence of a proton gradient across the membrane. The alpha chain is a regulatory subunit. This Desulfitobacterium hafniense (strain Y51) protein is ATP synthase subunit alpha.